We begin with the raw amino-acid sequence, 426 residues long: Phosphomethylpyrimidine synthase (426 aa).

Residues asparagine 65, methionine 94, tyrosine 123, histidine 162, 184-186 (SRG), 225-228 (DGMR), and glutamate 264 contribute to the substrate site. Histidine 268 provides a ligand contact to Zn(2+). Tyrosine 291 serves as a coordination point for substrate. Histidine 332 is a binding site for Zn(2+). [4Fe-4S] cluster-binding residues include cysteine 408, cysteine 411, and cysteine 415.

Belongs to the ThiC family. Requires [4Fe-4S] cluster as cofactor.

It carries out the reaction 5-amino-1-(5-phospho-beta-D-ribosyl)imidazole + S-adenosyl-L-methionine = 4-amino-2-methyl-5-(phosphooxymethyl)pyrimidine + CO + 5'-deoxyadenosine + formate + L-methionine + 3 H(+). The protein operates within cofactor biosynthesis; thiamine diphosphate biosynthesis. In terms of biological role, catalyzes the synthesis of the hydroxymethylpyrimidine phosphate (HMP-P) moiety of thiamine from aminoimidazole ribotide (AIR) in a radical S-adenosyl-L-methionine (SAM)-dependent reaction. The polypeptide is Phosphomethylpyrimidine synthase (Methanococcus aeolicus (strain ATCC BAA-1280 / DSM 17508 / OCM 812 / Nankai-3)).